A 179-amino-acid polypeptide reads, in one-letter code: Sec-independent protein translocase protein TatB (179 aa).

The chain crosses the membrane as a helical span at residues 1 to 21; it reads MFDLGFWEVLIIMLIGLLILG. Composition is skewed to basic and acidic residues over residues 75 to 86 and 94 to 106; these read KDVEKNARRFEA and TFRDVGRQADDAA. A disordered region spans residues 75–179; sequence KDVEKNARRF…QGGGGEEKRQ (105 aa).

This sequence belongs to the TatB family. As to quaternary structure, the Tat system comprises two distinct complexes: a TatABC complex, containing multiple copies of TatA, TatB and TatC subunits, and a separate TatA complex, containing only TatA subunits. Substrates initially bind to the TatABC complex, which probably triggers association of the separate TatA complex to form the active translocon.

The protein localises to the cell inner membrane. Functionally, part of the twin-arginine translocation (Tat) system that transports large folded proteins containing a characteristic twin-arginine motif in their signal peptide across membranes. Together with TatC, TatB is part of a receptor directly interacting with Tat signal peptides. TatB may form an oligomeric binding site that transiently accommodates folded Tat precursor proteins before their translocation. The chain is Sec-independent protein translocase protein TatB from Alkalilimnicola ehrlichii (strain ATCC BAA-1101 / DSM 17681 / MLHE-1).